The chain runs to 479 residues: Bifunctional protein HldE (479 aa).

The interval M1–I322 is ribokinase. Position 198-201 (N198–E201) interacts with ATP. The active site involves D267. The tract at residues F350–T479 is cytidylyltransferase.

It in the N-terminal section; belongs to the carbohydrate kinase PfkB family. The protein in the C-terminal section; belongs to the cytidylyltransferase family. Homodimer.

The catalysed reaction is D-glycero-beta-D-manno-heptose 7-phosphate + ATP = D-glycero-beta-D-manno-heptose 1,7-bisphosphate + ADP + H(+). It catalyses the reaction D-glycero-beta-D-manno-heptose 1-phosphate + ATP + H(+) = ADP-D-glycero-beta-D-manno-heptose + diphosphate. Its pathway is nucleotide-sugar biosynthesis; ADP-L-glycero-beta-D-manno-heptose biosynthesis; ADP-L-glycero-beta-D-manno-heptose from D-glycero-beta-D-manno-heptose 7-phosphate: step 1/4. It participates in nucleotide-sugar biosynthesis; ADP-L-glycero-beta-D-manno-heptose biosynthesis; ADP-L-glycero-beta-D-manno-heptose from D-glycero-beta-D-manno-heptose 7-phosphate: step 3/4. Its function is as follows. Catalyzes the phosphorylation of D-glycero-D-manno-heptose 7-phosphate at the C-1 position to selectively form D-glycero-beta-D-manno-heptose-1,7-bisphosphate. Functionally, catalyzes the ADP transfer from ATP to D-glycero-beta-D-manno-heptose 1-phosphate, yielding ADP-D-glycero-beta-D-manno-heptose. The protein is Bifunctional protein HldE of Azorhizobium caulinodans (strain ATCC 43989 / DSM 5975 / JCM 20966 / LMG 6465 / NBRC 14845 / NCIMB 13405 / ORS 571).